The chain runs to 311 residues: Syndecan-1 (311 aa).

The N-terminal stretch at 1-22 (MRRAALWLWLCALALRLQPALL) is a signal peptide. Residues 23 to 255 (HSVAVNMPPE…GLLDRKEVLG (233 aa)) are Extracellular-facing. Disordered stretches follow at residues 31–85 (PEDQ…PDAI) and 141–244 (TMAP…TGAS). The segment covering 32–42 (EDQDGSGDDSD) has biased composition (acidic residues). An O-linked (Xyl...) (chondroitin sulfate) serine glycan is attached at S37. N43 carries an N-linked (GlcNAc...) asparagine glycan. Residues S45 and S47 are each glycosylated (O-linked (Xyl...) (heparan sulfate) serine). The segment covering 71 to 84 (TTTATAPEPTSPDA) has biased composition (low complexity). Composition is skewed to basic and acidic residues over residues 151-162 (PHRDVQPDHHET) and 169-180 (GRMEPHRPHVEE). S204 and S214 each carry an O-linked (Xyl...) (chondroitin sulfate) serine glycan. The segment covering 215–226 (GENAAGAAGEPG) has biased composition (low complexity). Residues 256–276 (GVIAGGLVGLIFAVCLVGFML) form a helical membrane-spanning segment. Residues 277 to 311 (YRMKKKDEGSYSLEEPKQANGGAYQKPTKQEEFYA) are Cytoplasmic-facing. Positions 285-311 (GSYSLEEPKQANGGAYQKPTKQEEFYA) are disordered. S286 carries the post-translational modification Phosphoserine.

The protein belongs to the syndecan proteoglycan family. As to quaternary structure, interacts with CDCP1. Interacts (via C-terminus) with TIAM1 (via PDZ domain). Interacts with MDK. Post-translationally, shedding is enhanced by a number of factors such as heparanase, thrombin or EGF. Also by stress and wound healing. PMA-mediated shedding is inhibited by TIMP3.

It localises to the membrane. The protein localises to the secreted. The protein resides in the extracellular exosome. Functionally, cell surface proteoglycan that contains both heparan sulfate and chondroitin sulfate and that links the cytoskeleton to the interstitial matrix. Regulates exosome biogenesis in concert with SDCBP and PDCD6IP. Able to induce its own expression in dental mesenchymal cells and also in the neighboring dental epithelial cells via an MSX1-mediated pathway. The chain is Syndecan-1 from Bos taurus (Bovine).